Here is a 192-residue protein sequence, read N- to C-terminus: Pyridoxal 5'-phosphate synthase subunit PdxT (192 aa).

Residue 53 to 55 (GES) coordinates L-glutamine. Cys-85 (nucleophile) is an active-site residue. L-glutamine-binding positions include Arg-112 and 140–141 (IR). Residues His-176 and Glu-178 each act as charge relay system in the active site.

This sequence belongs to the glutaminase PdxT/SNO family. As to quaternary structure, in the presence of PdxS, forms a dodecamer of heterodimers. Only shows activity in the heterodimer.

The enzyme catalyses aldehydo-D-ribose 5-phosphate + D-glyceraldehyde 3-phosphate + L-glutamine = pyridoxal 5'-phosphate + L-glutamate + phosphate + 3 H2O + H(+). The catalysed reaction is L-glutamine + H2O = L-glutamate + NH4(+). It functions in the pathway cofactor biosynthesis; pyridoxal 5'-phosphate biosynthesis. Its function is as follows. Catalyzes the hydrolysis of glutamine to glutamate and ammonia as part of the biosynthesis of pyridoxal 5'-phosphate. The resulting ammonia molecule is channeled to the active site of PdxS. This is Pyridoxal 5'-phosphate synthase subunit PdxT from Natronomonas pharaonis (strain ATCC 35678 / DSM 2160 / CIP 103997 / JCM 8858 / NBRC 14720 / NCIMB 2260 / Gabara) (Halobacterium pharaonis).